Here is a 359-residue protein sequence, read N- to C-terminus: Src kinase-associated phosphoprotein 2 (359 aa).

Phosphoserine occurs at positions 5, 6, and 9. The segment at 67 to 88 (GDAEDGEEYDDPFAGPPDTISL) is disordered. Y75 is subject to Phosphotyrosine. Residues S87 and S90 each carry the phosphoserine modification. The PH domain maps to 116-219 (FVLKAGYLEK…WVQQLKFVLQ (104 aa)). Phosphotyrosine is present on residues Y151 and Y197. S223 bears the Phosphoserine mark. Y261 bears the Phosphotyrosine mark. Phosphoserine is present on S286. One can recognise an SH3 domain in the interval 297 to 358 (DYANFYQGLW…PKAYIMEMYD (62 aa)).

This sequence belongs to the SKAP family. Interacts with FYB1, which is required for SKAP2 protein stability. Interacts with PTPNS1. Part of a complex consisting of SKAP2, FYB1 and PTPNS1. Part of a complex consisting of SKAP2, FYB1 and LILRB3. Interacts with LAT, GRB2, PTK2B, and PRAM1. May interact with actin. May interact with FYN, HCK and LYN. Interacts with FASLG.

The protein resides in the cytoplasm. May be involved in B-cell and macrophage adhesion processes. In B-cells, may act by coupling the B-cell receptor (BCR) to integrin activation. May play a role in src signaling pathway. The chain is Src kinase-associated phosphoprotein 2 (SKAP2) from Pongo abelii (Sumatran orangutan).